Reading from the N-terminus, the 247-residue chain is Triosephosphate isomerase (247 aa).

Substrate is bound by residues asparagine 10 and lysine 12. Histidine 94 serves as the catalytic Electrophile. The Proton acceptor role is filled by glutamate 164.

The protein belongs to the triosephosphate isomerase family. As to quaternary structure, homodimer.

The protein resides in the cytoplasm. It catalyses the reaction D-glyceraldehyde 3-phosphate = dihydroxyacetone phosphate. The enzyme catalyses dihydroxyacetone phosphate = methylglyoxal + phosphate. Its pathway is carbohydrate biosynthesis; gluconeogenesis. It participates in carbohydrate degradation; glycolysis; D-glyceraldehyde 3-phosphate from glycerone phosphate: step 1/1. Functionally, triosephosphate isomerase is an extremely efficient metabolic enzyme that catalyzes the interconversion between dihydroxyacetone phosphate (DHAP) and D-glyceraldehyde-3-phosphate (G3P) in glycolysis and gluconeogenesis. It is also responsible for the non-negligible production of methylglyoxal a reactive cytotoxic side-product that modifies and can alter proteins, DNA and lipids. The polypeptide is Triosephosphate isomerase (tpi-1) (Caenorhabditis elegans).